Reading from the N-terminus, the 498-residue chain is ADP,ATP carrier protein 1 (498 aa).

At 1–33 (MNNPKNDNYLSELSKVIWPIERYENKKFLPMAF) the chain is on the cytoplasmic side. Residues 34–54 (MMFCILLNYSTLRSIKDGFVV) form a helical membrane-spanning segment. A disulfide bond links Cys37 and Cys85. The Extracellular segment spans residues 55–67 (TDIGAEAISFLKT). Residues 68-88 (YIVLPSAVIAMVIYVKLCDIL) form a helical membrane-spanning segment. Residues 89–92 (KQEN) lie on the Cytoplasmic side of the membrane. The helical transmembrane segment at 93-113 (VFYVITSFFLGYFALFAFVLY) threads the bilayer. The Extracellular segment spans residues 114–147 (PYPDLVHPDPETIESWSVAYPNVKWFIRIVGKWS). The helical transmembrane segment at 148 to 168 (FASFYTMAELWGTMMLSLLFW) threads the bilayer. At 169 to 184 (QFANQITKTDEAKRFY) the chain is on the cytoplasmic side. The helical transmembrane segment at 185–205 (SMFGLLANLALPVTSVIIGYC) threads the bilayer. At 206 to 218 (LHEKTQIVAEHLK) the chain is on the extracellular side. The helical transmembrane segment at 219–239 (FVPLFVIMITSSFLVILTYRW) threads the bilayer. The Cytoplasmic portion of the chain corresponds to 240–279 (MNKNVLTDPRLYDPALVKEKKAKAKMSLIDSFKMIFTSKY). A helical membrane pass occupies residues 280 to 300 (VGYIALLLIAYGVSVNLVEGV). Topologically, residues 301–320 (WKSKVKELYPTKEAYTIYMG) are extracellular. The chain crosses the membrane as a helical span at residues 321–341 (KFQFYQGWVAIAFMLIGSNIL). Residues 342-348 (RKVSWLT) lie on the Cytoplasmic side of the membrane. A helical membrane pass occupies residues 349 to 369 (AAMITPLMMLITGAAFFAFIF). The Extracellular portion of the chain corresponds to 370-379 (FDSVIAMHLT). A helical membrane pass occupies residues 380–400 (GILASGPLALAVMIGMIQNVL). At 401–438 (SKGVKYSLFDATKNMAYIPLDKDLRVKGQAAVEVIGGR) the chain is on the cytoplasmic side. 436–442 (GGRFGKS) lines the ATP pocket. A helical membrane pass occupies residues 439–459 (FGKSGGAIIQSTFFILFPAFG). Residues 460-465 (FVEATP) are Extracellular-facing. Residues 466–486 (YFASIFFVIVILWIYAVKGLN) form a helical membrane-spanning segment. At 487 to 498 (KEYKVLVNKTEK) the chain is on the cytoplasmic side.

It belongs to the ADP/ATP translocase tlc family.

The protein localises to the cell membrane. Provides the rickettsial cell with host ATP in exchange for rickettsial ADP. This is an obligate exchange system. This energy acquiring activity is an important component of rickettsial parasitism. This chain is ADP,ATP carrier protein 1 (tlcA), found in Rickettsia conorii (strain ATCC VR-613 / Malish 7).